Reading from the N-terminus, the 82-residue chain is Cytochrome c oxidase subunit 8, mitochondrial (82 aa).

The N-terminal 31 residues, 1–31 (MFSRVALRAAPRQQPFSLVARRTFQTTRAQL), are a transit peptide targeting the mitochondrion. Over 32 to 52 (SSPYHYPEGPRSNLPFNPKTR) the chain is Mitochondrial matrix. The helical transmembrane segment at 53–75 (FFWFRYLMYCVVGFGSPVAIAVW) threads the bilayer. The Mitochondrial intermembrane portion of the chain corresponds to 76–82 (QTYRPRS).

It belongs to the cytochrome c oxidase VIIc family. In terms of assembly, component of the cytochrome c oxidase (complex IV, CIV), a multisubunit enzyme composed of 11 subunits. The complex is composed of a catalytic core of 3 subunits Cox1, Cox2 and Cox3, encoded in the mitochondrial DNA, and 8 supernumerary subunits Cox4, Cox5a/Cox5, Cox6, Cox7, Cox8, Cox7a/Cox9, Cox6b/Cox12 and Cox6a/Cox13, which are encoded in the nuclear genome. The complex exists as a monomer or a dimer and forms respiratory supercomplexes (SCs) in the inner mitochondrial membrane with NADH-ubiquinone oxidoreductase (complex I, CI) and ubiquinol-cytochrome c oxidoreductase (cytochrome b-c1 complex, complex III, CIII), resulting in various different assemblies (supercomplexes I(1)IV(1), I(1)III(3)IV(2), III(2)IV(1) and III(2)IV(2) as well as larger supercomplexes of compositions like I(1)III(2)IV(5-6)).

It is found in the mitochondrion inner membrane. Its pathway is energy metabolism; oxidative phosphorylation. Its function is as follows. Component of the cytochrome c oxidase, the last enzyme in the mitochondrial electron transport chain which drives oxidative phosphorylation. The respiratory chain contains 3 multisubunit complexes succinate dehydrogenase (complex II, CII), ubiquinol-cytochrome c oxidoreductase (cytochrome b-c1 complex, complex III, CIII) and cytochrome c oxidase (complex IV, CIV), that cooperate to transfer electrons derived from NADH and succinate to molecular oxygen, creating an electrochemical gradient over the inner membrane that drives transmembrane transport and the ATP synthase. Cytochrome c oxidase is the component of the respiratory chain that catalyzes the reduction of oxygen to water. Electrons originating from reduced cytochrome c in the intermembrane space (IMS) are transferred via the dinuclear copper A center (CU(A)) of Cox2 and heme A of Cox1 to the active site in Cox1, a binuclear center (BNC) formed by heme A3 and copper B (CU(B)). The BNC reduces molecular oxygen to 2 water molecules using 4 electrons from cytochrome c in the IMS and 4 protons from the mitochondrial matrix. This chain is Cytochrome c oxidase subunit 8, mitochondrial (cox-15), found in Neurospora crassa (strain ATCC 24698 / 74-OR23-1A / CBS 708.71 / DSM 1257 / FGSC 987).